We begin with the raw amino-acid sequence, 280 residues long: Myelin proteolipid protein B (280 aa).

Residues 1-10 are Cytoplasmic-facing; that stretch reads MGWHDGCIRC. S-palmitoyl cysteine attachment occurs at residues Cys-7 and Cys-10. Residues 11–36 form a helical membrane-spanning segment; that stretch reads MVGVPFASVIATVLCFAGVALFCGCG. Residues 37–59 lie on the Extracellular side of the membrane; sequence HEALSGTEKLIETYFSKNYQEYE. A helical membrane pass occupies residues 60–88; that stretch reads YLIHVINAFQYVIYGIAIFFFLYGILLLA. Over 89–152 the chain is Cytoplasmic; that stretch reads EGFYTTTAIK…LGKWLGHPDK (64 aa). Residues Cys-140 and Cys-142 are each lipidated (S-palmitoyl cysteine). Residues 153 to 179 form a helical membrane-spanning segment; sequence FVGVTYVITILWILIFACSAVPVYIYF. Residues 180-239 are Extracellular-facing; that stretch reads NTWVTCQSIAFPGKTTTSVSTLCLDARMYGVLPWNAFPGKVCGTSLLAICKTSEFQMTFH. Intrachain disulfides connect Cys-185/Cys-229 and Cys-202/Cys-221. The chain crosses the membrane as a helical span at residues 240–269; that stretch reads LFIAAFVGAAATLVALLTYMVGASFNYAVL. Over 270-280 the chain is Cytoplasmic; that stretch reads RVTGRSDRSKF.

This sequence belongs to the myelin proteolipid protein family.

It is found in the cell membrane. Functionally, this is the major myelin protein from the central nervous system. It plays an important role in the formation or maintenance of the multilamellar structure of myelin. The chain is Myelin proteolipid protein B (plp1-b) from Xenopus laevis (African clawed frog).